Reading from the N-terminus, the 145-residue chain is Internal scaffolding protein VP3 (145 aa).

This sequence belongs to the microviridae B protein family.

The protein resides in the host cytoplasm. In terms of biological role, participates in the assembly of the viral procapsid in the cytoplasm. Released from the procapsid upon genome packaging, possibly through affinity displacement by the protein ORF8, or by proteolysis. The polypeptide is Internal scaffolding protein VP3 (Chlamydia phage 1 (Bacteriophage Chp1)).